The sequence spans 481 residues: Polygalacturonase QRT3 (481 aa).

The N-terminal stretch at 1–27 is a signal peptide; it reads MELRKSQVAMPVFLAIMSLMVSQVVFA. PbH1 repeat units follow at residues 203 to 226, 261 to 282, and 356 to 377; these read SLRT…LVKS, GNDN…MVSG, and IRGV…QIVQ. N-linked (GlcNAc...) asparagine glycosylation is found at N415 and N455.

It belongs to the glycosyl hydrolase 28 family. As to expression, expressed in the tapetum cells in the anthers and in the ovules of open flowers.

It localises to the secreted. It is found in the cell wall. It catalyses the reaction (1,4-alpha-D-galacturonosyl)n+m + H2O = (1,4-alpha-D-galacturonosyl)n + (1,4-alpha-D-galacturonosyl)m.. Polygalacturonase required for degrading the pollen mother cell wall during microspore development. The sequence is that of Polygalacturonase QRT3 (QRT3) from Arabidopsis thaliana (Mouse-ear cress).